Consider the following 316-residue polypeptide: MTAQQLDASGRLRHLLTLEGLPRETLLQLLDRAGQIRDAAVGRVGNKRQVLAGSAVCTLFFEPSTRTRSSFQLAAQRLGADVLNFDASTSSTRKGETACDTLRNLEAMGVRGFVVRHPDDGAVAALAEAAGEGTALINAGDGRSAHPTQGLLDMLTLRQAKGPDFSKMKVVIVGDVKHSRVARTDLHALRTLGVGEIRVCGPQSLLPDDETLKGCVVGDDFDAMLEGVDALMMLRLQRERMEEGLVPSLEQYHAQYGLTNERLARAGKDAAVLHPGPINRGVEVTDEVADGPQSWVLRQVANGVAVRMAVLETLLG.

Carbamoyl phosphate contacts are provided by R66 and T67. Residue K94 coordinates L-aspartate. 3 residues coordinate carbamoyl phosphate: R116, H146, and Q149. Residues R180 and R235 each coordinate L-aspartate. The carbamoyl phosphate site is built by G276 and P277.

This sequence belongs to the aspartate/ornithine carbamoyltransferase superfamily. ATCase family. As to quaternary structure, heterododecamer (2C3:3R2) of six catalytic PyrB chains organized as two trimers (C3), and six regulatory PyrI chains organized as three dimers (R2).

It carries out the reaction carbamoyl phosphate + L-aspartate = N-carbamoyl-L-aspartate + phosphate + H(+). The protein operates within pyrimidine metabolism; UMP biosynthesis via de novo pathway; (S)-dihydroorotate from bicarbonate: step 2/3. Functionally, catalyzes the condensation of carbamoyl phosphate and aspartate to form carbamoyl aspartate and inorganic phosphate, the committed step in the de novo pyrimidine nucleotide biosynthesis pathway. The protein is Aspartate carbamoyltransferase catalytic subunit of Stenotrophomonas maltophilia (strain R551-3).